The following is a 505-amino-acid chain: 2,3-bisphosphoglycerate-independent phosphoglycerate mutase (505 aa).

Asp13 and Ser63 together coordinate Mn(2+). The active-site Phosphoserine intermediate is Ser63. Substrate is bound by residues His124, 153-154, Arg183, Arg189, 254-257, and Lys329; these read RD and RADR. Mn(2+)-binding residues include Asp395, His399, Asp436, His437, and His455.

It belongs to the BPG-independent phosphoglycerate mutase family. In terms of assembly, monomer. The cofactor is Mn(2+).

The catalysed reaction is (2R)-2-phosphoglycerate = (2R)-3-phosphoglycerate. Its pathway is carbohydrate degradation; glycolysis; pyruvate from D-glyceraldehyde 3-phosphate: step 3/5. Catalyzes the interconversion of 2-phosphoglycerate and 3-phosphoglycerate. This Agrobacterium fabrum (strain C58 / ATCC 33970) (Agrobacterium tumefaciens (strain C58)) protein is 2,3-bisphosphoglycerate-independent phosphoglycerate mutase.